Reading from the N-terminus, the 350-residue chain is tRNA uridine(34) hydroxylase (350 aa).

The region spanning 146-240 is the Rhodanese domain; sequence DDPDALFIDM…YARKAREQGL (95 aa). The active-site Cysteine persulfide intermediate is the C200.

The protein belongs to the TrhO family.

It carries out the reaction uridine(34) in tRNA + AH2 + O2 = 5-hydroxyuridine(34) in tRNA + A + H2O. Its function is as follows. Catalyzes oxygen-dependent 5-hydroxyuridine (ho5U) modification at position 34 in tRNAs, the first step in 5-carboxymethoxyuridine (cmo5U) biosynthesis. May be part of an alternate pathway, which is able to bypass cmo5U biogenesis in a subset of tRNAs under aerobic conditions. This is tRNA uridine(34) hydroxylase from Escherichia coli (strain K12).